Reading from the N-terminus, the 204-residue chain is UPF0056 membrane protein CT_852 (204 aa).

Transmembrane regions (helical) follow at residues 9-29 (TLLFYALFNALGSLPVFIALL), 39-59 (HIILRESIFALLLLLLFVTFG), 66-86 (LGIILPAFQFTGSLLLGSIAI), 107-127 (IFFPLAFPVITGPAMITSTLG), 138-158 (IVLGAIVLAWLFSLITLLLSS), and 176-196 (FGISLALMAGNLMLKALSTAF).

Belongs to the UPF0056 (MarC) family.

It is found in the cell membrane. The polypeptide is UPF0056 membrane protein CT_852 (Chlamydia trachomatis serovar D (strain ATCC VR-885 / DSM 19411 / UW-3/Cx)).